We begin with the raw amino-acid sequence, 341 residues long: UDP-glucose 4-epimerase (341 aa).

This sequence belongs to the polysaccharide synthase family.

It carries out the reaction UDP-alpha-D-glucose = UDP-alpha-D-galactose. Its function is as follows. Epimerizes UDP-galactose to UDP-glucose. This is UDP-glucose 4-epimerase (capD) from Rickettsia akari (strain Hartford).